Reading from the N-terminus, the 95-residue chain is Alpha-conotoxin GeXXA (95 aa).

The N-terminal stretch at Met1–Ala21 is a signal peptide. A propeptide spanning residues Ala22–Arg45 is cleaved from the precursor. Intrachain disulfides connect Cys64–Cys73, Cys69–Cys81, Cys74–Cys91, and Cys79–Cys93.

It belongs to the conotoxin D superfamily. As to quaternary structure, homodimer. Pseudo-homodimer (identical sequence, different post-translational modifications). Expressed by the venom duct.

It is found in the secreted. Functionally, alpha-D-conopeptides act as non-competitive inhibitors of nicotinic acetylcholine receptors (nAChR). Through its two C-terminal domains, this homodimeric protein would bind to two nAChR allosteric sites, located outside the nAChR C-loop of the principal binding face and at the adjacent binding interface in a clockwise direction. This toxin has strong inhibitory activity on rat alpha-9-alpha-10 (CHRNA9-CHRNA10) (IC(50)=1.2 nM) and a moderate inhibitory activity on human alpha-7 (CHRNA7) (IC(50)=210 nM), rat alpha-3-beta-2 (CHRNA3-CHRNB2) (IC(50)=498 nM), rat alpha-3-beta-4 (CHRNA3-CHRNB4) (IC(50)=614 nM) and rat alpha-1-beta-1-delta-epsilon (CHRNA1-CHRNB1-CHRNE-CHRND) (IC(50)=743 nM) subtypes. Shows a weaker inhibitory activity on human alpha-9-alpha-10 (IC(50)=28 nM) than on the rat channel. This is explained by a different residue in the probable binding site (His-31 in rat alpha-10 and Leu-31 in human). This is Alpha-conotoxin GeXXA from Conus generalis (General cone).